A 503-amino-acid chain; its full sequence is Maturase K (503 aa).

Belongs to the intron maturase 2 family. MatK subfamily.

The protein resides in the plastid. It localises to the chloroplast. Functionally, usually encoded in the trnK tRNA gene intron. Probably assists in splicing its own and other chloroplast group II introns. The polypeptide is Maturase K (Lathyrus vestitus (Pacific pea)).